The sequence spans 75 residues: Neuropeptide-like protein 31 (75 aa).

The signal sequence occupies residues 1–22 (MISTSSILVLVVLLACFMAANA). Residues Y29, Y39, Y49, Y56, and Y64 each carry the tyrosine amide modification. A Tryptophan amide modification is found at W73.

The protein belongs to the YARP (YGGW-amide related peptide) family. Expressed in hypoderm.

The protein resides in the secreted. Antimicrobial peptides that have antifungal activity against D.coniospora. Has weak antibacterial activity against Gram-positive bacteria M.luteus and Gram-negative E.coli. This chain is Neuropeptide-like protein 31 (nlp-31), found in Caenorhabditis elegans.